The primary structure comprises 66 residues: Surface composition regulator (66 aa).

The protein belongs to the GlgS family.

Functionally, major determinant of cell surface composition. Negatively regulates motility, adhesion and synthesis of biofilm exopolysaccharides. This chain is Surface composition regulator, found in Escherichia coli O127:H6 (strain E2348/69 / EPEC).